The chain runs to 116 residues: Fluoride-specific ion channel FluC 1 (116 aa).

The next 4 helical transmembrane spans lie at 2 to 22 (LVLVGLAGAGAAVGALSRYGI), 33 to 53 (PLPIATLFINLTGALLLGWIL), 63 to 83 (IFLGTGIMGGYTTFSTMINEL), and 96 to 116 (WEYFGLSLVGGLVMVYLGTLI). Glycine 71 and threonine 74 together coordinate Na(+).

Belongs to the fluoride channel Fluc/FEX (TC 1.A.43) family.

It localises to the cell membrane. The catalysed reaction is fluoride(in) = fluoride(out). Its activity is regulated as follows. Na(+) is not transported, but it plays an essential structural role and its presence is essential for fluoride channel function. Functionally, fluoride-specific ion channel. Important for reducing fluoride concentration in the cell, thus reducing its toxicity. The polypeptide is Fluoride-specific ion channel FluC 1 (Lactiplantibacillus plantarum (strain ATCC BAA-793 / NCIMB 8826 / WCFS1) (Lactobacillus plantarum)).